Here is a 162-residue protein sequence, read N- to C-terminus: Endoribonuclease YbeY (162 aa).

Zn(2+) is bound by residues His-117, His-121, and His-127.

This sequence belongs to the endoribonuclease YbeY family. The cofactor is Zn(2+).

The protein resides in the cytoplasm. Functionally, single strand-specific metallo-endoribonuclease involved in late-stage 70S ribosome quality control and in maturation of the 3' terminus of the 16S rRNA. This chain is Endoribonuclease YbeY, found in Francisella tularensis subsp. novicida (strain U112).